The primary structure comprises 407 residues: tRNA pseudouridine synthase Pus10 (407 aa).

D232 (nucleophile) is an active-site residue. Y300 and Y369 together coordinate substrate.

It belongs to the pseudouridine synthase Pus10 family.

It carries out the reaction uridine(54) in tRNA = pseudouridine(54) in tRNA. The catalysed reaction is uridine(55) in tRNA = pseudouridine(55) in tRNA. Functionally, responsible for synthesis of pseudouridine from uracil-54 and uracil-55 in the psi GC loop of transfer RNAs. This is tRNA pseudouridine synthase Pus10 from Methanosphaera stadtmanae (strain ATCC 43021 / DSM 3091 / JCM 11832 / MCB-3).